We begin with the raw amino-acid sequence, 128 residues long: Protein C10 (128 aa).

This sequence belongs to the UPF0456 family.

Its subcellular location is the cytoplasm. The chain is Protein C10 from Xenopus tropicalis (Western clawed frog).